Consider the following 666-residue polypeptide: tRNA 5-methylaminomethyl-2-thiouridine biosynthesis bifunctional protein MnmC (666 aa).

The interval 1–245 is tRNA (mnm(5)s(2)U34)-methyltransferase; it reads MKQYAIQPAT…KREMLCGVME (245 aa). Positions 270–666 are FAD-dependent cmnm(5)s(2)U34 oxidoreductase; it reads IGGGIASALL…RKLLKGKAVK (397 aa).

In the N-terminal section; belongs to the methyltransferase superfamily. tRNA (mnm(5)s(2)U34)-methyltransferase family. This sequence in the C-terminal section; belongs to the DAO family. FAD is required as a cofactor.

It localises to the cytoplasm. It catalyses the reaction 5-aminomethyl-2-thiouridine(34) in tRNA + S-adenosyl-L-methionine = 5-methylaminomethyl-2-thiouridine(34) in tRNA + S-adenosyl-L-homocysteine + H(+). In terms of biological role, catalyzes the last two steps in the biosynthesis of 5-methylaminomethyl-2-thiouridine (mnm(5)s(2)U) at the wobble position (U34) in tRNA. Catalyzes the FAD-dependent demodification of cmnm(5)s(2)U34 to nm(5)s(2)U34, followed by the transfer of a methyl group from S-adenosyl-L-methionine to nm(5)s(2)U34, to form mnm(5)s(2)U34. The protein is tRNA 5-methylaminomethyl-2-thiouridine biosynthesis bifunctional protein MnmC of Salmonella typhi.